A 144-amino-acid polypeptide reads, in one-letter code: Major allergen Blo t 12 (144 aa).

Residues methionine 1 to serine 20 form the signal peptide. The segment at glutamine 24–histidine 77 is disordered. One can recognise a Chitin-binding type-2 domain in the interval histidine 92–asparagine 144. Cysteine 127 and cysteine 140 are disulfide-bonded.

The polypeptide is Major allergen Blo t 12 (Blomia tropicalis (Mite)).